Consider the following 1349-residue polypeptide: MERDVDADIRLGSELLSKYPLDINVAALIRNYTAGELFDNLRLFFGASPEDYNLQFEAIFGIYCNKLEWIHFLGTALGITSHVVRFPDAEKLSVGKIVFNVTIPRVAVPSGVPNTKNATAVVVKYTERMPIGISFELSFAALEKLRLSFQDATLLDKLINIQAINNTLQCINNSANALQRGLINVVLTKLLHKAPPFFILKYLEEPTGGISSNNSVNRSNAVFSIKSLLPQCLFILNRVENKTSILNILTEMTALVKHSIMVDSSLYTTSGGDEVSGVLVTTSNVLNVITNMFSKLIHKASVVAPVAYGEFIMSKENAVTALAHHAIIADFDQYVQNAQNLTAGPLKKSNFLEMGQDRSTISVQLMQIGDTLVALEQLDKVYRNTMTHNPLDNRLELTFHTVIGLHLPKSISYSTMDAKVSLNSTIRNNVPTSIYFYDKDFTLQKVEFTDCLRTLCHPIFNDGQVCARIFTREIKDGERLCDGHQYVLDNDPPYPNEQHMRNFYGDAPPPMTTNQLKNEYQDLEFFKPSNKCLYTELHPMYDFSDVMIDEAVGQICTPRIMIGNMPQALAPSEFQEIRSMQILEISKNVYPQLYETTVGLATQTLNNPEYPEICYVISVLVHGNRDAFAAAHTLIVACINNAYTTKNMLPFIHDFDMVRLIANNMTDSRILSDAHMHYKRLWSLIGFLKKLVETGGLHGHLVDDPMLCYLNALFDKRLLPPIIHHFPAMKQDMNVKANNRPLNIRGAELRDYDVSNLERMINVGGHVVYRDDIIEAEDLTVSSKIYYYCMLPALTNNHMCGASLLLNQFIPDGFFNSDFIKPEALYAAEQTFEASVMLRRLLEQAGVSTARRPELHEIMTSFFRLLLRMPENARVLEITGPLDHAQRHCMPAFQAVHHSLYDGFLLVAPPLILAEYIQAIPFHKFYSDPVIAQACAPYIREFLTRYPQCNRTDGGFPTPPYFSREYFNWHRTPFFKYSDTCLNTVKSMMTLACMHTKFSPVSTYLQSRARIHPGFAVTLVRTDLFDVERILYSSKSSMSVIIGDPYVYKEKTDIHTTYHITQDISTVDMGMGYSAVTCPAYLRRIVSDMGATLQDLFKVFPVASFGNDELDEWIRTHTGGTHASLFDPNTIDILTFGQVNVNEQPGILIGQKAVVECVVTPVTAPLHYFKIPNNPRGRASCTLAIDPERKQDLFRVIYDHSIPDAQSFLSTANPWGSIWGSIGDVMYNEFHREQIGYNSRIYSPCKQFFSLDDITISNRTLFKITGEYNSRSKSCIDGDNETQYVCVEGTSDMVEKPCIIFQESYPLLSASSEGLLESHIKPPAVRMSETHFQNYLIEEVIPITQILKK.

Belongs to the herpesviridae major capsid protein family. In terms of assembly, homomultimer. Makes the hexons and eleven out of twelve pentons. Interacts with triplex proteins 1/TRX1 and 2/TRX2; adjacent capsomers are linked together in groups of three by triplexes, heterotrimeric complexes composed of one molecule of TRX1 and two molecules of TRX2. Interacts with scaffold protein; this interaction allows efficient MCP transport to the host nucleus. Interacts with capsid vertex component 2/CVC2. Interacts with the small capsomere-interacting protein/SCP.

The protein localises to the virion. The protein resides in the host nucleus. Functionally, self-assembles to form an icosahedral capsid with a T=16 symmetry, about 200 nm in diameter, and consisting of 150 hexons and 12 pentons (total of 162 capsomers). Hexons form the edges and faces of the capsid and are each composed of six MCP molecules. In contrast, one penton is found at each of the 12 vertices. Eleven of the pentons are MCP pentamers, while the last vertex is occupied by the portal complex. The capsid is surrounded by a layer of proteinaceous material designated the tegument which, in turn, is enclosed in an envelope of host cell-derived lipids containing virus-encoded glycoproteins. The chain is Major capsid protein from Elephas maximus (Indian elephant).